The primary structure comprises 92 residues: Large ribosomal subunit protein bL34m (92 aa).

A mitochondrion-targeting transit peptide spans 1-46; sequence MAVLAGSLLGPTSRSAALLGGRWLQPRAWLGFPDAWGLPTPQQARG. Residue Ser-71 is modified to Phosphoserine.

Belongs to the bacterial ribosomal protein bL34 family. In terms of assembly, component of the mitochondrial large ribosomal subunit (mt-LSU). Mature mammalian 55S mitochondrial ribosomes consist of a small (28S) and a large (39S) subunit. The 28S small subunit contains a 12S ribosomal RNA (12S mt-rRNA) and 30 different proteins. The 39S large subunit contains a 16S rRNA (16S mt-rRNA), a copy of mitochondrial valine transfer RNA (mt-tRNA(Val)), which plays an integral structural role, and 52 different proteins.

It localises to the mitochondrion. This chain is Large ribosomal subunit protein bL34m (MRPL34), found in Homo sapiens (Human).